We begin with the raw amino-acid sequence, 108 residues long: ATP synthase epsilon chain (108 aa).

The protein belongs to the ATPase epsilon chain family. F-type ATPases have 2 components, CF(1) - the catalytic core - and CF(0) - the membrane proton channel. CF(1) has five subunits: alpha(3), beta(3), gamma(1), delta(1), epsilon(1). CF(0) has three main subunits: a, b and c.

It localises to the cell inner membrane. Its function is as follows. Produces ATP from ADP in the presence of a proton gradient across the membrane. This is ATP synthase epsilon chain from Rickettsia bellii (strain OSU 85-389).